A 434-amino-acid chain; its full sequence is Serine hydroxymethyltransferase 2 (434 aa).

(6S)-5,6,7,8-tetrahydrofolate contacts are provided by residues L136 and 140–142; that span reads GHL. K245 carries the post-translational modification N6-(pyridoxal phosphate)lysine.

Belongs to the SHMT family. Homodimer. Pyridoxal 5'-phosphate serves as cofactor.

It localises to the cytoplasm. The catalysed reaction is (6R)-5,10-methylene-5,6,7,8-tetrahydrofolate + glycine + H2O = (6S)-5,6,7,8-tetrahydrofolate + L-serine. It functions in the pathway one-carbon metabolism; tetrahydrofolate interconversion. The protein operates within amino-acid biosynthesis; glycine biosynthesis; glycine from L-serine: step 1/1. Catalyzes the reversible interconversion of serine and glycine with tetrahydrofolate (THF) serving as the one-carbon carrier. This reaction serves as the major source of one-carbon groups required for the biosynthesis of purines, thymidylate, methionine, and other important biomolecules. Also exhibits THF-independent aldolase activity toward beta-hydroxyamino acids, producing glycine and aldehydes, via a retro-aldol mechanism. The protein is Serine hydroxymethyltransferase 2 of Rhodopseudomonas palustris (strain ATCC BAA-98 / CGA009).